The chain runs to 229 residues: MVHPYLFLNFFRELLHPLGFSEAGADAVVYTWLIMIGLVVLSIAATKRLQAVPSGLQNFMEVIVGGIENMLVETMGEHGKPFFPLVATLALFILVSNLIGLIPGFFPPTANINTTAACAVVVFVTTHIVGVKHHGAGYIKHFLGPIAWLAPMMFFIEVIGHLSRVISLTLRLFGNMNGHELVLIIFFGLAPFVVPLPMMLMGVLVSFIQAFVFMLLAMIYIQGSLEHAH.

The next 6 membrane-spanning stretches (helical) occupy residues 25–45 (ADAV…SIAA), 82–102 (FFPL…IGLI), 104–124 (GFFP…VVFV), 142–162 (FLGP…IGHL), 181–201 (LVLI…MMLM), and 202–222 (GVLV…IYIQ).

Belongs to the ATPase A chain family. As to quaternary structure, F-type ATPases have 2 components, CF(1) - the catalytic core - and CF(0) - the membrane proton channel. CF(1) has five subunits: alpha(3), beta(3), gamma(1), delta(1), epsilon(1). CF(0) has three main subunits: a(1), b(2) and c(9-12). The alpha and beta chains form an alternating ring which encloses part of the gamma chain. CF(1) is attached to CF(0) by a central stalk formed by the gamma and epsilon chains, while a peripheral stalk is formed by the delta and b chains.

It is found in the cell inner membrane. Functionally, key component of the proton channel; it plays a direct role in the translocation of protons across the membrane. The sequence is that of ATP synthase subunit a from Geobacter sp. (strain M21).